The primary structure comprises 486 residues: UDP-N-acetylmuramate--L-alanine ligase (486 aa).

Residue 129-135 (GTHGKTT) participates in ATP binding.

It belongs to the MurCDEF family.

It localises to the cytoplasm. It catalyses the reaction UDP-N-acetyl-alpha-D-muramate + L-alanine + ATP = UDP-N-acetyl-alpha-D-muramoyl-L-alanine + ADP + phosphate + H(+). It functions in the pathway cell wall biogenesis; peptidoglycan biosynthesis. In terms of biological role, cell wall formation. This Vibrio vulnificus (strain CMCP6) protein is UDP-N-acetylmuramate--L-alanine ligase.